Here is a 921-residue protein sequence, read N- to C-terminus: Valine--tRNA ligase (921 aa).

Residues Pro40 to His50 carry the 'HIGH' region motif. Residues Lys522–Ser526 carry the 'KMSKS' region motif. Lys525 is a binding site for ATP. Residues Met849–Leu921 are a coiled coil.

This sequence belongs to the class-I aminoacyl-tRNA synthetase family. ValS type 1 subfamily. As to quaternary structure, monomer.

It is found in the cytoplasm. It carries out the reaction tRNA(Val) + L-valine + ATP = L-valyl-tRNA(Val) + AMP + diphosphate. In terms of biological role, catalyzes the attachment of valine to tRNA(Val). As ValRS can inadvertently accommodate and process structurally similar amino acids such as threonine, to avoid such errors, it has a 'posttransfer' editing activity that hydrolyzes mischarged Thr-tRNA(Val) in a tRNA-dependent manner. In Legionella pneumophila (strain Paris), this protein is Valine--tRNA ligase.